A 632-amino-acid chain; its full sequence is PTS system mannitol-specific EIICBA component (632 aa).

The region spanning 12 to 341 (FGRFLSNMIM…ILLKYDFNTI (330 aa)) is the PTS EIIC type-2 domain. 6 helical membrane passes run 24 to 45 (ISIFIAWGMMNALFMPLGWQPN), 50 to 70 (QLISPMIFYLLPILIGYTGGS), 134 to 155 (SLAILGILLAIISFFTIGPFIE), 165 to 185 (IQIILSYNLLPLTSIIIEPAK), 273 to 292 (LILGGMSGIFILVLLHGGLI), and 313 to 334 (FSNIISVACSFLVSFISSSILL). A PTS EIIB type-2 domain is found at 374 to 469 (KTIIVACDAG…KLVENMVFLY (96 aa)). The active-site Phosphocysteine intermediate; for EIIB activity is the Cys-380. Phosphocysteine; by EIIA is present on Cys-380. In terms of domain architecture, PTS EIIA type-2 spans 488–630 (FQLNEENIIL…KEALSLLTME (143 aa)). His-548 (tele-phosphohistidine intermediate; for EIIA activity) is an active-site residue. The residue at position 548 (His-548) is a Phosphohistidine; by HPr.

As to quaternary structure, homodimer. An intramolecular phosphotransfer takes places between His-548 and Cys-380.

It is found in the cell inner membrane. The enzyme catalyses D-mannitol(out) + N(pros)-phospho-L-histidyl-[protein] = D-mannitol 1-phosphate(in) + L-histidyl-[protein]. The phosphoenolpyruvate-dependent sugar phosphotransferase system (sugar PTS), a major carbohydrate active transport system, catalyzes the phosphorylation of incoming sugar substrates concomitantly with their translocation across the cell membrane. This system is involved in D-mannitol transport. The chain is PTS system mannitol-specific EIICBA component (mtlA) from Buchnera aphidicola subsp. Acyrthosiphon pisum (strain APS) (Acyrthosiphon pisum symbiotic bacterium).